The following is a 98-amino-acid chain: UPF0175 protein VNG_0066H (98 aa).

This sequence belongs to the UPF0175 family.

The protein is UPF0175 protein VNG_0066H of Halobacterium salinarum (strain ATCC 700922 / JCM 11081 / NRC-1) (Halobacterium halobium).